A 134-amino-acid polypeptide reads, in one-letter code: UPF0715 membrane protein YoaG (134 aa).

Transmembrane regions (helical) follow at residues 9-29 (LMTL…YSFV), 35-55 (IIAL…YGLF), 72-92 (VMYL…FFVI), and 106-126 (FYYM…SLIL).

This sequence belongs to the UPF0715 family.

The protein localises to the cell membrane. This is UPF0715 membrane protein YoaG (yoaG) from Bacillus subtilis (strain 168).